A 132-amino-acid polypeptide reads, in one-letter code: Small ribosomal subunit protein uS8 (132 aa).

It belongs to the universal ribosomal protein uS8 family. In terms of assembly, part of the 30S ribosomal subunit. Contacts proteins S5 and S12.

Its function is as follows. One of the primary rRNA binding proteins, it binds directly to 16S rRNA central domain where it helps coordinate assembly of the platform of the 30S subunit. This Borreliella burgdorferi (strain ZS7) (Borrelia burgdorferi) protein is Small ribosomal subunit protein uS8.